The primary structure comprises 320 residues: Epoxidase atD (320 aa).

N-linked (GlcNAc...) asparagine glycosylation is found at Asn-245 and Asn-299.

It participates in secondary metabolite biosynthesis. Functionally, epoxidase; part of the gene cluster that mediates the biosynthesis of terreic acid, a quinone epoxide inhibitor of Bruton's tyrosine kinase. The first step of the pathway is the synthesis of 6-methylsalicylic acid (6-MSA) by the 6-methylsalicylic acid synthase atX. In the biosynthesis of 6-MSA, atX utilizes one acetyl-CoA and three malonyl-CoAs as its substrates and catalyzes a series of programmed reactions including Claisen condensation, reduction, aldol cyclization, and the hydrolytic cleavage that yields 6-MSA. The 6-methylsalicylate 1-monooxygenase atA then catalyzes the decarboxylative hydroxylation of 6-MSA to 3-methylcatechol. The next step is the conversion of 3-methylcatechol to 3-methyl-1,2,4-benzenetriol by cytochrome P450 monooxygenase atE, which is enhanced by cytochrome P450 monooxygenase atG. Then, the epoxidase atD catalyzes the epoxidation and hydroxyl oxidation of 3-methyl-1,2,4-benzenetriol to terremutin. Lastly, GMC oxidoreductase atC oxidizes terremutin to terreic acid. The protein is Epoxidase atD of Aspergillus terreus (strain NIH 2624 / FGSC A1156).